The following is a 564-amino-acid chain: Apyrase (564 aa).

A signal peptide spans 1–25 (MAGKPGIQLFVIFLLLSSFAAVVWA). A divalent metal cation is bound by residues Asp-48, His-50, Asp-99, Asn-131, His-234, and His-258. Residue Arg-371 coordinates AMP. Asn-391 carries an N-linked (GlcNAc...) asparagine glycan. AMP is bound by residues Arg-406, Phe-425, and Asp-515.

The protein belongs to the 5'-nucleotidase family. A divalent metal cation is required as a cofactor. As to expression, female salivary gland (at protein level). Low-level expression in male tissues. Not detected in female carcasses without salivary glands.

It is found in the secreted. The enzyme catalyses a ribonucleoside 5'-triphosphate + 2 H2O = a ribonucleoside 5'-phosphate + 2 phosphate + 2 H(+). Functionally, facilitates hematophagy by inhibiting ADP-dependent platelet aggregation in the host. Cleaves adenosine triphosphate (ATP) and adenosine diphosphate (ADP) to adenosine monophosphate (AMP) and inorganic phosphate. May reduce probing time by facilitating the speed of locating blood. This Aedes albopictus (Asian tiger mosquito) protein is Apyrase.